A 245-amino-acid chain; its full sequence is Uridylate kinase (245 aa).

ATP is bound at residue 12–15 (KISG). Glycine 55 contributes to the UMP binding site. ATP is bound by residues glycine 56 and arginine 60. Residues aspartate 76 and 137–144 (AGAPYLTT) contribute to the UMP site. ATP contacts are provided by threonine 164, tyrosine 171, and aspartate 174.

The protein belongs to the UMP kinase family. As to quaternary structure, homohexamer.

The protein localises to the cytoplasm. It catalyses the reaction UMP + ATP = UDP + ADP. The protein operates within pyrimidine metabolism; CTP biosynthesis via de novo pathway; UDP from UMP (UMPK route): step 1/1. Its activity is regulated as follows. Inhibited by UTP. In terms of biological role, catalyzes the reversible phosphorylation of UMP to UDP. In Chlamydia muridarum (strain MoPn / Nigg), this protein is Uridylate kinase.